A 60-amino-acid polypeptide reads, in one-letter code: Large ribosomal subunit protein bL32 (60 aa).

The disordered stretch occupies residues methionine 1 to threonine 36. Basic residues predominate over residues serine 9–histidine 19.

It belongs to the bacterial ribosomal protein bL32 family.

This Methylibium petroleiphilum (strain ATCC BAA-1232 / LMG 22953 / PM1) protein is Large ribosomal subunit protein bL32.